The sequence spans 102 residues: ATP-dependent Clp protease adapter protein ClpS (102 aa).

Belongs to the ClpS family. As to quaternary structure, binds to the N-terminal domain of the chaperone ClpA.

Involved in the modulation of the specificity of the ClpAP-mediated ATP-dependent protein degradation. The polypeptide is ATP-dependent Clp protease adapter protein ClpS (Janthinobacterium sp. (strain Marseille) (Minibacterium massiliensis)).